Reading from the N-terminus, the 80-residue chain is MRALRVSQALVRSFSSSTRSHLENRVAEKQKLFQADNDLPVHLKGGGMDNVLYRLTMTLTLGGTAYCLYCLGWASFPHKK.

Residues 1–21 constitute a mitochondrion transit peptide; the sequence is MRALRVSQALVRSFSSSTRSH. The Mitochondrial matrix portion of the chain corresponds to 22 to 46; the sequence is LENRVAEKQKLFQADNDLPVHLKGG. The chain crosses the membrane as a helical span at residues 47 to 75; that stretch reads GMDNVLYRLTMTLTLGGTAYCLYCLGWAS. Over 76–80 the chain is Mitochondrial intermembrane; it reads FPHKK.

It belongs to the cytochrome c oxidase VIIa family. Component of the complex IV (CIV, cytochrome c oxidase), a multisubunit enzyme composed of 14 subunits. The complex is composed of a catalytic core of 3 subunits MT-CO1, MT-CO2 and MT-CO3, encoded in the mitochondrial DNA, and 11 supernumerary subunits COX4I, COX5A, COX5B, COX6A, COX6B, COX6C, COX7A, COX7B, COX7C, COX8 and NDUFA4, which are encoded in the nuclear genome. The complex exists as a monomer or a dimer and forms supercomplexes (SCs) in the inner mitochondrial membrane with NADH-ubiquinone oxidoreductase (complex I, CI) and ubiquinol-cytochrome c oxidoreductase (cytochrome b-c1 complex, complex III, CIII), resulting in different assemblies (supercomplex SCI(1)III(2)IV(1) and megacomplex MCI(2)III(2)IV(2)).

It localises to the mitochondrion inner membrane. It functions in the pathway energy metabolism; oxidative phosphorylation. Its function is as follows. Component of the mitochondrial respiratory complex IV (CIV, also named cytochrome c oxidase complex), the last enzyme in the mitochondrial electron transport chain which drives oxidative phosphorylation. The CIV complex is the component of the respiratory chain that catalyzes the reduction of oxygen to water. Acts as an assembly factor that specifically drives the homodimerization of CIV complexes, mediating the formation of mitochondrial respiratory supercomplexes (respirasomes) containing two CIV: supercomplxes with two molecules of CIV show improved activity. Despite being highly expressed in brown adipose tissue, not required for thermogenesis. The protein is Cytochrome c oxidase subunit 7A1, mitochondrial of Mus musculus (Mouse).